The chain runs to 335 residues: Ubiquinol oxidase 1b, mitochondrial (335 aa).

Residues 1–47 (MSSRMAGATLLRHLGPRLFAAEPVYSGLAASARGVMPAAARIFPARM) constitute a mitochondrion transit peptide. Residues 160–180 (ALLLETVAGVPGMVGGMLLHL) form a helical membrane-spanning segment. Fe cation contacts are provided by Glu-164, Glu-203, and His-206. The helical transmembrane segment at 222–242 (ALVLAAQGVFFNAYFVGYLVS) threads the bilayer. Residues Glu-254, Glu-305, and His-308 each contribute to the Fe cation site.

Belongs to the alternative oxidase family. Fe cation is required as a cofactor.

The protein resides in the mitochondrion inner membrane. The catalysed reaction is 2 a ubiquinol + O2 = 2 a ubiquinone + 2 H2O. Functionally, catalyzes the cyanide-resistant oxidation of ubiquinol and the reduction of molecular oxygen to water, but does not translocate protons and consequently is not linked to oxidative phosphorylation. May increase respiration when the cytochrome respiratory pathway is restricted, or in response to low temperatures. In Oryza sativa subsp. japonica (Rice), this protein is Ubiquinol oxidase 1b, mitochondrial.